The following is a 279-amino-acid chain: Fatty acid metabolism regulator protein (279 aa).

The region spanning 6–74 (KSPAGFAEKY…HGKPTKVNQF (69 aa)) is the HTH gntR-type domain. The segment at residues 34–53 (ERELSELIGVTRTTLREVLQ) is a DNA-binding region (H-T-H motif).

As to quaternary structure, homodimer.

The protein localises to the cytoplasm. In terms of biological role, multifunctional regulator of fatty acid metabolism. The sequence is that of Fatty acid metabolism regulator protein from Vibrio parahaemolyticus serotype O3:K6 (strain RIMD 2210633).